Consider the following 41-residue polypeptide: Perlinhibin (41 aa).

In terms of processing, contains four disulfide bonds.

In terms of biological role, binds to calcite crystals in the shell and inhibits further shell growth at the binding site. This chain is Perlinhibin, found in Haliotis laevigata (Smooth Australian abalone).